The following is a 465-amino-acid chain: Chromosomal replication initiator protein DnaA (465 aa).

Residues 1-87 (MLWTDCLTRL…RPGSILSSSE (87 aa)) form a domain I, interacts with DnaA modulators region. The disordered stretch occupies residues 81–123 (SILSSSEQPATTTAALQTAPIPQPAKVKREPEPVANTAVSSKS). A compositionally biased stretch (low complexity) spans 88-100 (QPATTTAALQTAP). Positions 88 to 127 (QPATTTAALQTAPIPQPAKVKREPEPVANTAVSSKSSKKK) are domain II. The interval 128-345 (LLNPQFTFSL…GALNKVVAIS (218 aa)) is domain III, AAA+ region. ATP is bound by residues G173, G175, K176, and T177. The segment at 346–465 (RFKGAPIDLD…YKNLLRLLQS (120 aa)) is domain IV, binds dsDNA.

Belongs to the DnaA family. In terms of assembly, oligomerizes as a right-handed, spiral filament on DNA at oriC.

It localises to the cytoplasm. In terms of biological role, plays an essential role in the initiation and regulation of chromosomal replication. ATP-DnaA binds to the origin of replication (oriC) to initiate formation of the DNA replication initiation complex once per cell cycle. Binds the DnaA box (a 9 base pair repeat at the origin) and separates the double-stranded (ds)DNA. Forms a right-handed helical filament on oriC DNA; dsDNA binds to the exterior of the filament while single-stranded (ss)DNA is stabiized in the filament's interior. The ATP-DnaA-oriC complex binds and stabilizes one strand of the AT-rich DNA unwinding element (DUE), permitting loading of DNA polymerase. After initiation quickly degrades to an ADP-DnaA complex that is not apt for DNA replication. Binds acidic phospholipids. This chain is Chromosomal replication initiator protein DnaA, found in Acinetobacter baumannii (strain AB307-0294).